The sequence spans 355 residues: UDP-N-acetylglucosamine--N-acetylmuramyl-(pentapeptide) pyrophosphoryl-undecaprenol N-acetylglucosamine transferase (355 aa).

UDP-N-acetyl-alpha-D-glucosamine contacts are provided by residues 15 to 17 (TGG), Asn127, Arg163, Ser191, Ile244, 263 to 268 (ALTVSE), and Gln288.

This sequence belongs to the glycosyltransferase 28 family. MurG subfamily.

Its subcellular location is the cell inner membrane. The enzyme catalyses di-trans,octa-cis-undecaprenyl diphospho-N-acetyl-alpha-D-muramoyl-L-alanyl-D-glutamyl-meso-2,6-diaminopimeloyl-D-alanyl-D-alanine + UDP-N-acetyl-alpha-D-glucosamine = di-trans,octa-cis-undecaprenyl diphospho-[N-acetyl-alpha-D-glucosaminyl-(1-&gt;4)]-N-acetyl-alpha-D-muramoyl-L-alanyl-D-glutamyl-meso-2,6-diaminopimeloyl-D-alanyl-D-alanine + UDP + H(+). It functions in the pathway cell wall biogenesis; peptidoglycan biosynthesis. Cell wall formation. Catalyzes the transfer of a GlcNAc subunit on undecaprenyl-pyrophosphoryl-MurNAc-pentapeptide (lipid intermediate I) to form undecaprenyl-pyrophosphoryl-MurNAc-(pentapeptide)GlcNAc (lipid intermediate II). The sequence is that of UDP-N-acetylglucosamine--N-acetylmuramyl-(pentapeptide) pyrophosphoryl-undecaprenol N-acetylglucosamine transferase from Shigella boydii serotype 18 (strain CDC 3083-94 / BS512).